The following is a 106-amino-acid chain: uncharacterized protein (106 aa).

This is an uncharacterized protein from Rhodococcus erythropolis (Arthrobacter picolinophilus).